Here is a 120-residue protein sequence, read N- to C-terminus: U13-lycotoxin-Ls1f (120 aa).

Residues 1–19 (MKILFVLISILYAVYRFSS) form the signal peptide. Positions 20–54 (EEDVDSAYLANELEPVEDINSEQYAALEPKEEQER) are excised as a propeptide. 4 cysteine pairs are disulfide-bonded: cysteine 56–cysteine 70, cysteine 63–cysteine 76, cysteine 69–cysteine 87, and cysteine 78–cysteine 85. Residues 56-95 (CAGMGQDCKDDCDCCLNIATCNCWFGRYFCSCTFGDYQTC) form the Agouti domain.

It belongs to the neurotoxin 05 (agouti) family. Contains 6 disulfide bonds. In terms of tissue distribution, expressed by the venom gland.

Its subcellular location is the secreted. This is U13-lycotoxin-Ls1f from Lycosa singoriensis (Wolf spider).